The chain runs to 379 residues: Cytochrome b (379 aa).

4 consecutive transmembrane segments (helical) span residues 33–53, 77–98, 113–133, and 178–198; these read FGSL…FLAM, WLIR…FIHV, WNIG…GYVL, and FFAF…VHLL. Heme b contacts are provided by H83 and H97. Residues H182 and H196 each contribute to the heme b site. H201 contributes to the a ubiquinone binding site. The next 4 membrane-spanning stretches (helical) occupy residues 226 to 246, 288 to 308, 320 to 340, and 347 to 367; these read IKDL…ALFF, LGGV…PLLN, ITQT…WIGG, and FTMI…ILMP.

This sequence belongs to the cytochrome b family. In terms of assembly, the cytochrome bc1 complex contains 11 subunits: 3 respiratory subunits (MT-CYB, CYC1 and UQCRFS1), 2 core proteins (UQCRC1 and UQCRC2) and 6 low-molecular weight proteins (UQCRH/QCR6, UQCRB/QCR7, UQCRQ/QCR8, UQCR10/QCR9, UQCR11/QCR10 and a cleavage product of UQCRFS1). This cytochrome bc1 complex then forms a dimer. Heme b serves as cofactor.

The protein localises to the mitochondrion inner membrane. Component of the ubiquinol-cytochrome c reductase complex (complex III or cytochrome b-c1 complex) that is part of the mitochondrial respiratory chain. The b-c1 complex mediates electron transfer from ubiquinol to cytochrome c. Contributes to the generation of a proton gradient across the mitochondrial membrane that is then used for ATP synthesis. The polypeptide is Cytochrome b (MT-CYB) (Akodon dolores (Dolorous grass mouse)).